A 217-amino-acid polypeptide reads, in one-letter code: Large ribosomal subunit protein uL1 (217 aa).

N6,N6-dimethyllysine; alternate is present on Lys122. Residue Lys122 is modified to N6-methyllysine; alternate.

This sequence belongs to the universal ribosomal protein uL1 family.

The chain is Large ribosomal subunit protein uL1 (rpl10a) from Dictyostelium discoideum (Social amoeba).